The sequence spans 69 residues: U2-agatoxin-Ao1o (69 aa).

The N-terminal stretch at 1-20 is a signal peptide; sequence MKAIISLLLISAMVFSMFEA. Residues 21-34 constitute a propeptide that is removed on maturation; sequence VPVRRRFTAFEGER. 3 disulfide bridges follow: Cys36/Cys52, Cys43/Cys57, and Cys51/Cys67. Residue Leu68 is modified to Leucine amide.

The protein belongs to the neurotoxin 01 (U2-agtx) family. In terms of tissue distribution, expressed by the venom gland.

The protein localises to the secreted. Its function is as follows. Insect active toxin causing rapid but reversible paralysis in crickets. No activity shown in mammals. Does not show effect on mammalian voltage-gated calcium channels. The sequence is that of U2-agatoxin-Ao1o from Agelena orientalis (Funnel-web spider).